We begin with the raw amino-acid sequence, 421 residues long: Gamma-glutamyl phosphate reductase (421 aa).

The protein belongs to the gamma-glutamyl phosphate reductase family.

Its subcellular location is the cytoplasm. It catalyses the reaction L-glutamate 5-semialdehyde + phosphate + NADP(+) = L-glutamyl 5-phosphate + NADPH + H(+). It participates in amino-acid biosynthesis; L-proline biosynthesis; L-glutamate 5-semialdehyde from L-glutamate: step 2/2. In terms of biological role, catalyzes the NADPH-dependent reduction of L-glutamate 5-phosphate into L-glutamate 5-semialdehyde and phosphate. The product spontaneously undergoes cyclization to form 1-pyrroline-5-carboxylate. This chain is Gamma-glutamyl phosphate reductase, found in Herminiimonas arsenicoxydans.